The following is a 569-amino-acid chain: Membrane protein insertase YidC (569 aa).

A helical transmembrane segment spans residues 6–26 (FVLFLIFATSLLFLWDAWQKE). Composition is skewed to polar residues over residues 32–52 (QGPKTAVQGTETQANTGTAGT) and 62–74 (LASSVPQRGSTAE). The interval 32 to 81 (QGPKTAVQGTETQANTGTAGTAETPVPGDQLASSVPQRGSTAENGAPVRA) is disordered. Helical transmembrane passes span 348–368 (VVDYGWLTVIGAPLFWLLSLF), 375–395 (WGVAIILLTMSVKLAFFPLSA), 442–462 (GGCLPILVQIPVFISLYWVLL), 479–499 (LSAPDPYYVLPVIMGISMFLQ), and 519–539 (PLAFSVFFFFFPAGLVLYSLV).

The protein belongs to the OXA1/ALB3/YidC family. Type 1 subfamily. As to quaternary structure, interacts with the Sec translocase complex via SecD. Specifically interacts with transmembrane segments of nascent integral membrane proteins during membrane integration.

Its subcellular location is the cell inner membrane. Its function is as follows. Required for the insertion and/or proper folding and/or complex formation of integral membrane proteins into the membrane. Involved in integration of membrane proteins that insert both dependently and independently of the Sec translocase complex, as well as at least some lipoproteins. Aids folding of multispanning membrane proteins. The chain is Membrane protein insertase YidC from Nitrosospira multiformis (strain ATCC 25196 / NCIMB 11849 / C 71).